Reading from the N-terminus, the 65-residue chain is Small ribosomal subunit protein bS21 (65 aa).

Belongs to the bacterial ribosomal protein bS21 family.

This Trichlorobacter lovleyi (strain ATCC BAA-1151 / DSM 17278 / SZ) (Geobacter lovleyi) protein is Small ribosomal subunit protein bS21.